The chain runs to 582 residues: Proline--tRNA ligase (582 aa).

It belongs to the class-II aminoacyl-tRNA synthetase family. ProS type 1 subfamily. As to quaternary structure, homodimer.

It localises to the cytoplasm. It carries out the reaction tRNA(Pro) + L-proline + ATP = L-prolyl-tRNA(Pro) + AMP + diphosphate. In terms of biological role, catalyzes the attachment of proline to tRNA(Pro) in a two-step reaction: proline is first activated by ATP to form Pro-AMP and then transferred to the acceptor end of tRNA(Pro). As ProRS can inadvertently accommodate and process non-cognate amino acids such as alanine and cysteine, to avoid such errors it has two additional distinct editing activities against alanine. One activity is designated as 'pretransfer' editing and involves the tRNA(Pro)-independent hydrolysis of activated Ala-AMP. The other activity is designated 'posttransfer' editing and involves deacylation of mischarged Ala-tRNA(Pro). The misacylated Cys-tRNA(Pro) is not edited by ProRS. This chain is Proline--tRNA ligase, found in Mycolicibacterium paratuberculosis (strain ATCC BAA-968 / K-10) (Mycobacterium paratuberculosis).